The following is a 249-amino-acid chain: Vacuolar iron transporter 1 (249 aa).

The Cytoplasmic portion of the chain corresponds to 1–36 (MADGANDGGNPGAEEQQRLLDQHKEAHFTAGEIVRD). A helical membrane pass occupies residues 37 to 57 (IIIGVSDGLTVPFALAAGLSG). Residues 58–63 (ANASSS) are Vacuolar-facing. Residues 64–84 (IVLTAGIAEVAAGAISMGLGG) traverse the membrane as a helical segment. At 85 to 170 (YLAAKSEADN…PKRALQSAFT (86 aa)) the chain is on the cytoplasmic side. Positions 90–165 (SEADNYAREL…LEKPDPKRAL (76 aa)) are cytoplasmic metal binding domain (MBD). Fe cation contacts are provided by glutamate 102, glutamate 105, glutamate 113, glutamate 116, methionine 149, and glutamate 153. A helical transmembrane segment spans residues 171–191 (IAIAYVLGGLVPLIPYMFIPV). Topologically, residues 192-194 (ARK) are vacuolar. A helical membrane pass occupies residues 195 to 215 (AVVASVILTLMALLIFGYAKG). The Cytoplasmic portion of the chain corresponds to 216–226 (YFTDNKPFKSA). A helical transmembrane segment spans residues 227–247 (LQTALIGAIASAAAFGMAKAV). At 248-249 (QS) the chain is on the vacuolar side.

It belongs to the CCC1 family. Homodimer. The dimeric interaction is mediated by both the transmembrane domains (TMDs) and the cytoplasmic metal binding domain (MBD).

The protein localises to the vacuole membrane. The enzyme catalyses Fe(2+)(in) = Fe(2+)(out). With respect to regulation, transport of iron ions is inhibited by zinc ions. Functionally, vacuolar iron transporter involved in the transfer of iron ions from the cytosol to the vacuole for intracellular iron storage. Can transport cobalt ions from the cytosol to the vacuole. The protein is Vacuolar iron transporter 1 of Eucalyptus grandis (Flooded gum).